Consider the following 232-residue polypeptide: MSSLMKKRRRKSSSNTLRNIVSCRISHSWKEGNEPVTQWKAIVLDQLPTNPSLYFVKYDGIDSIYVLELYSDDRILNLKVLPPIVVFPQVRDAHLARALVGRAVQHKFERKDGSEVNWRGVVLAQVPIMKDLFYITYKKDPALYAYQLLDDYKEGNLHMIPDTPPAEERSGDDSDVLIGNWVEYTRKDGSKKFGKVVYQVLANPSVYFIKFHGDIHIYVYTMVPKILEVEKS.

The protein belongs to the SPIN/STSY family. As to expression, expressed in testis (at protein level).

The chain is Y-linked testis-specific protein 1 (Ssty1) from Mus musculus (Mouse).